We begin with the raw amino-acid sequence, 131 residues long: D-ribose pyranase (131 aa).

His20 serves as the catalytic Proton donor. Substrate contacts are provided by residues Asp28, His98, and 120–122; that span reads YAN.

This sequence belongs to the RbsD / FucU family. RbsD subfamily. Homodecamer.

Its subcellular location is the cytoplasm. The enzyme catalyses beta-D-ribopyranose = beta-D-ribofuranose. Its pathway is carbohydrate metabolism; D-ribose degradation; D-ribose 5-phosphate from beta-D-ribopyranose: step 1/2. Functionally, catalyzes the interconversion of beta-pyran and beta-furan forms of D-ribose. This is D-ribose pyranase from Clostridium perfringens (strain 13 / Type A).